We begin with the raw amino-acid sequence, 458 residues long: tRNA-2-methylthio-N(6)-dimethylallyladenosine synthase (458 aa).

The region spanning 15–134 is the MTTase N-terminal domain; sequence KKVFIKTYGC…LPELLQQAQQ (120 aa). Residues cysteine 24, cysteine 60, cysteine 97, cysteine 175, cysteine 179, and cysteine 182 each coordinate [4Fe-4S] cluster. The Radical SAM core domain occupies 161 to 393; it reads QKRGVSAFLT…QALLLDQQHR (233 aa). The TRAM domain occupies 396–457; it reads RSKIGQTTDV…SNSFVGEKAN (62 aa).

It belongs to the methylthiotransferase family. MiaB subfamily. As to quaternary structure, monomer. [4Fe-4S] cluster serves as cofactor.

Its subcellular location is the cytoplasm. It carries out the reaction N(6)-dimethylallyladenosine(37) in tRNA + (sulfur carrier)-SH + AH2 + 2 S-adenosyl-L-methionine = 2-methylsulfanyl-N(6)-dimethylallyladenosine(37) in tRNA + (sulfur carrier)-H + 5'-deoxyadenosine + L-methionine + A + S-adenosyl-L-homocysteine + 2 H(+). Catalyzes the methylthiolation of N6-(dimethylallyl)adenosine (i(6)A), leading to the formation of 2-methylthio-N6-(dimethylallyl)adenosine (ms(2)i(6)A) at position 37 in tRNAs that read codons beginning with uridine. This is tRNA-2-methylthio-N(6)-dimethylallyladenosine synthase from Bartonella bacilliformis (strain ATCC 35685 / KC583 / Herrer 020/F12,63).